The primary structure comprises 390 residues: 3-ketoacyl-CoA thiolase (390 aa).

Cysteine 95 serves as the catalytic Acyl-thioester intermediate. Active-site proton acceptor residues include histidine 346 and cysteine 376.

The protein belongs to the thiolase-like superfamily. Thiolase family. In terms of assembly, heterotetramer of two alpha chains (FadB) and two beta chains (FadA).

It is found in the cytoplasm. It carries out the reaction an acyl-CoA + acetyl-CoA = a 3-oxoacyl-CoA + CoA. It functions in the pathway lipid metabolism; fatty acid beta-oxidation. Catalyzes the final step of fatty acid oxidation in which acetyl-CoA is released and the CoA ester of a fatty acid two carbons shorter is formed. The protein is 3-ketoacyl-CoA thiolase of Acinetobacter baylyi (strain ATCC 33305 / BD413 / ADP1).